The following is a 248-amino-acid chain: uncharacterized protein (248 aa).

The protein belongs to the glycosyltransferase 2 family.

This is an uncharacterized protein from Acanthamoeba polyphaga (Amoeba).